Reading from the N-terminus, the 306-residue chain is Tyrosine recombinase XerD (306 aa).

The region spanning 1-83 is the Core-binding (CB) domain; it reads MGFIAQFLEM…TIKSYYEFLI (83 aa). Residues 104–299 enclose the Tyr recombinase domain; sequence KLPEILSIAQ…QTNHLKKALL (196 aa). Catalysis depends on residues R145, K176, H251, R254, and H277. Catalysis depends on Y286, which acts as the O-(3'-phospho-DNA)-tyrosine intermediate.

This sequence belongs to the 'phage' integrase family. XerD subfamily. As to quaternary structure, forms a cyclic heterotetrameric complex composed of two molecules of XerC and two molecules of XerD.

It localises to the cytoplasm. In terms of biological role, site-specific tyrosine recombinase, which acts by catalyzing the cutting and rejoining of the recombining DNA molecules. The XerC-XerD complex is essential to convert dimers of the bacterial chromosome into monomers to permit their segregation at cell division. It also contributes to the segregational stability of plasmids. This is Tyrosine recombinase XerD from Rickettsia conorii (strain ATCC VR-613 / Malish 7).